Consider the following 63-residue polypeptide: Parvalbumin alpha (63 aa).

2 consecutive EF-hand domains span residues 28–38 (IEEEELGLILK) and 39–63 (VLLAAGDKDGDGKIGVDEFVTLVSE). Ca(2+) contacts are provided by E29, E32, D45, D47, D49, K51, and E56.

As to expression, detected in muscle and cutaneous mucus. In the skin, detected in cells in the basal region of the glandular epithelium of the dermal mucus glands (at protein level).

It localises to the cytoplasm. The protein localises to the secreted. In muscle, parvalbumin is thought to be involved in relaxation after contraction. It binds two calcium ions. In Rana temporaria (European common frog), this protein is Parvalbumin alpha.